A 151-amino-acid chain; its full sequence is Ribosome maturation factor RimP (151 aa).

It belongs to the RimP family.

The protein localises to the cytoplasm. Required for maturation of 30S ribosomal subunits. This is Ribosome maturation factor RimP from Thermoanaerobacter pseudethanolicus (strain ATCC 33223 / 39E) (Clostridium thermohydrosulfuricum).